We begin with the raw amino-acid sequence, 203 residues long: N-(5'-phosphoribosyl)anthranilate isomerase (203 aa).

It belongs to the TrpF family.

The enzyme catalyses N-(5-phospho-beta-D-ribosyl)anthranilate = 1-(2-carboxyphenylamino)-1-deoxy-D-ribulose 5-phosphate. Its pathway is amino-acid biosynthesis; L-tryptophan biosynthesis; L-tryptophan from chorismate: step 3/5. In Thermoanaerobacter sp. (strain X514), this protein is N-(5'-phosphoribosyl)anthranilate isomerase.